A 242-amino-acid chain; its full sequence is Polycomb group RING finger protein 3 (242 aa).

An RING-type zinc finger spans residues 17–56 (CRLCSGYLIDATTVTECLHTFCRSCLVKYLEENNTCPTCR). A disordered region spans residues 115–149 (AKQHLDPHRNGETKADDSSNKEAAEEKQEEDGDYH). Over residues 117-140 (QHLDPHRNGETKADDSSNKEAAEE) the composition is skewed to basic and acidic residues. The tract at residues 132-242 (SSNKEAAEEK…LHYRPKMDLL (111 aa)) is interaction with BCORL1.

Component of a PRC1-like complex that contains PCGF3, RNF2 and RYBP. Interacts with CBX6, CBX7 and CBX8. Interacts with BCORL1.

The protein localises to the nucleus. Its subcellular location is the nucleoplasm. Functionally, component of a Polycomb group (PcG) multiprotein PRC1-like complex, a complex class required to maintain the transcriptionally repressive state of many genes, including Hox genes, throughout development. PcG PRC1 complex acts via chromatin remodeling and modification of histones; it mediates monoubiquitination of histone H2A 'Lys-119', rendering chromatin heritably changed in its expressibility. Within the PRC1-like complex, regulates RNF2 ubiquitin ligase activity. Plays a redundant role with PCGF5 as part of a PRC1-like complex that mediates monoubiquitination of histone H2A 'Lys-119' on the X chromosome and is required for normal silencing of one copy of the X chromosome in XX females. The protein is Polycomb group RING finger protein 3 (PCGF3) of Bos taurus (Bovine).